The following is a 507-amino-acid chain: ATP synthase subunit alpha (507 aa).

Position 170-177 (170-177 (GDRQTGKT)) interacts with ATP.

The protein belongs to the ATPase alpha/beta chains family. In terms of assembly, F-type ATPases have 2 components, CF(1) - the catalytic core - and CF(0) - the membrane proton channel. CF(1) has five subunits: alpha(3), beta(3), gamma(1), delta(1), epsilon(1). CF(0) has three main subunits: a(1), b(2) and c(9-12). The alpha and beta chains form an alternating ring which encloses part of the gamma chain. CF(1) is attached to CF(0) by a central stalk formed by the gamma and epsilon chains, while a peripheral stalk is formed by the delta and b chains.

It localises to the cell inner membrane. It catalyses the reaction ATP + H2O + 4 H(+)(in) = ADP + phosphate + 5 H(+)(out). Its function is as follows. Produces ATP from ADP in the presence of a proton gradient across the membrane. The alpha chain is a regulatory subunit. This is ATP synthase subunit alpha from Fervidobacterium nodosum (strain ATCC 35602 / DSM 5306 / Rt17-B1).